The sequence spans 387 residues: MGEAPAVLVDHPENGHSNGVCVKSEPENTEITVDVGDRIFLIGGTHERNNFSIGVQIYDKISNNWFSPIVLGTGPKPSKGYSAFVLEQGRILVIKKGSPRNDSIWFLEVDSPYVREQKKLLRKEVVAWSKGVRGNAEKPIVISGPSGVGKGTLISMLMKEFPSMFGFSVSHTTRSPRSMEMDGVHYHFADKKVMEKEIKDGKFLEFASVHGNLYGTSIESVEAVTDSGKRCILDIDVQGARSVRASSLDAIFIFVCPPSMKELEDRLRARGTETEEQIQKRLRNAEAEIKEGISSGIFGLILYNDNLEECYKKLKNLLGLDGLAHVNGVEIEGINLPIEYAVSKMEDKIIIQETGKETRNKIVVDISSLNGGAPGRTRGILVDAIKF.

In terms of domain architecture, Guanylate kinase-like spans 137–319 (EKPIVISGPS…CYKKLKNLLG (183 aa)). 144 to 151 (GPSGVGKG) is a binding site for ATP. Catalysis depends on residues Arg177, Arg270, and Arg281. Residues Asn304 and Asp305 each coordinate ATP.

This sequence belongs to the guanylate kinase family. As to quaternary structure, monomer.

The catalysed reaction is GMP + ATP = GDP + ADP. Its function is as follows. Essential for recycling GMP and indirectly, cGMP. Required for normal development of the gametophyte and embryo, in association with GK2. This Arabidopsis thaliana (Mouse-ear cress) protein is Guanylate kinase 1 (GK-1).